Reading from the N-terminus, the 302-residue chain is Putative S-adenosyl-L-methionine-dependent methyltransferase MRA_0290 (302 aa).

Residues D126 and 155–156 (DL) each bind S-adenosyl-L-methionine.

This sequence belongs to the UPF0677 family.

In terms of biological role, exhibits S-adenosyl-L-methionine-dependent methyltransferase activity. This chain is Putative S-adenosyl-L-methionine-dependent methyltransferase MRA_0290, found in Mycobacterium tuberculosis (strain ATCC 25177 / H37Ra).